Consider the following 415-residue polypeptide: Serine hydroxymethyltransferase (415 aa).

Residues L117 and 121 to 123 (GHL) each bind (6S)-5,6,7,8-tetrahydrofolate. K226 is modified (N6-(pyridoxal phosphate)lysine). Residues E241 and 349-351 (SPF) contribute to the (6S)-5,6,7,8-tetrahydrofolate site.

It belongs to the SHMT family. As to quaternary structure, homodimer. It depends on pyridoxal 5'-phosphate as a cofactor.

It localises to the cytoplasm. The enzyme catalyses (6R)-5,10-methylene-5,6,7,8-tetrahydrofolate + glycine + H2O = (6S)-5,6,7,8-tetrahydrofolate + L-serine. It participates in one-carbon metabolism; tetrahydrofolate interconversion. Its pathway is amino-acid biosynthesis; glycine biosynthesis; glycine from L-serine: step 1/1. Its function is as follows. Catalyzes the reversible interconversion of serine and glycine with tetrahydrofolate (THF) serving as the one-carbon carrier. This reaction serves as the major source of one-carbon groups required for the biosynthesis of purines, thymidylate, methionine, and other important biomolecules. Also exhibits THF-independent aldolase activity toward beta-hydroxyamino acids, producing glycine and aldehydes, via a retro-aldol mechanism. In Trichlorobacter lovleyi (strain ATCC BAA-1151 / DSM 17278 / SZ) (Geobacter lovleyi), this protein is Serine hydroxymethyltransferase.